Here is a 307-residue protein sequence, read N- to C-terminus: Olfactory receptor 13G1 (307 aa).

Residues 1-22 (MNHSVVTEFIILGLTKKPELQG) lie on the Extracellular side of the membrane. A glycan (N-linked (GlcNAc...) asparagine) is linked at N2. The helical transmembrane segment at 23–43 (IIFLFFLIVYLVAFLGNMLII) threads the bilayer. The Cytoplasmic portion of the chain corresponds to 44 to 51 (IAKIYNNT). Residues 52–72 (LHTPMYVFLLTLAVVDIICTT) form a helical membrane-spanning segment. Residues 73-96 (SIIPKMLGTMLTSENTISYAGCMS) are Extracellular-facing. The cysteines at positions 94 and 186 are disulfide-linked. A helical membrane pass occupies residues 97–117 (QLFLFTWSLGAEMVLFTTMAY). The Cytoplasmic segment spans residues 118–136 (DRYVAICFPLHYSTIMNHH). A helical membrane pass occupies residues 137-157 (MCVALLSMVMAIAVTNSWVHT). At 158-194 (ALIMRLTFCGPNTIDHFFCEIPPLLALSCSPVRINEV) the chain is on the extracellular side. A helical membrane pass occupies residues 195–214 (MVYVADITLAIGDFILTCIS). Residues 215–234 (YGFIIVAILRIRTVEGKRKA) lie on the Cytoplasmic side of the membrane. The helical transmembrane segment at 235 to 255 (FSTCSSHLTVVTLYYSPVIYT) threads the bilayer. At 256 to 268 (YIRPASSYTFERD) the chain is on the extracellular side. A helical transmembrane segment spans residues 269-289 (KVVAALYTLVTPTLNPMVYSF). The Cytoplasmic segment spans residues 290–307 (QNREMQAGIRKVFAFLKH).

Belongs to the G-protein coupled receptor 1 family.

It localises to the cell membrane. Functionally, odorant receptor. This chain is Olfactory receptor 13G1 (OR13G1), found in Homo sapiens (Human).